A 428-amino-acid polypeptide reads, in one-letter code: Chaperone SurA (428 aa).

Residues 1–20 (MKNWKTLLLGIAMIANTSFA) form the signal peptide. PpiC domains follow at residues 171–272 (STEL…KVND) and 282–382 (VTEV…ELLD).

The protein resides in the periplasm. It catalyses the reaction [protein]-peptidylproline (omega=180) = [protein]-peptidylproline (omega=0). Chaperone involved in the correct folding and assembly of outer membrane proteins. Recognizes specific patterns of aromatic residues and the orientation of their side chains, which are found more frequently in integral outer membrane proteins. May act in both early periplasmic and late outer membrane-associated steps of protein maturation. The polypeptide is Chaperone SurA (Shigella dysenteriae serotype 1 (strain Sd197)).